The sequence spans 286 residues: Phosphoribosylaminoimidazole-succinocarboxamide synthase (286 aa).

This sequence belongs to the SAICAR synthetase family.

It catalyses the reaction 5-amino-1-(5-phospho-D-ribosyl)imidazole-4-carboxylate + L-aspartate + ATP = (2S)-2-[5-amino-1-(5-phospho-beta-D-ribosyl)imidazole-4-carboxamido]succinate + ADP + phosphate + 2 H(+). It participates in purine metabolism; IMP biosynthesis via de novo pathway; 5-amino-1-(5-phospho-D-ribosyl)imidazole-4-carboxamide from 5-amino-1-(5-phospho-D-ribosyl)imidazole-4-carboxylate: step 1/2. This is Phosphoribosylaminoimidazole-succinocarboxamide synthase from Histophilus somni (strain 2336) (Haemophilus somnus).